A 125-amino-acid polypeptide reads, in one-letter code: Aspartate 1-decarboxylase 2 (125 aa).

The active-site Schiff-base intermediate with substrate; via pyruvic acid is the Ser-25. Ser-25 is modified (pyruvic acid (Ser)). Thr-57 contributes to the substrate binding site. The active-site Proton donor is Tyr-58. 73–75 is a binding site for substrate; that stretch reads GAA.

It belongs to the PanD family. Heterooctamer of four alpha and four beta subunits. The cofactor is pyruvate. In terms of processing, is synthesized initially as an inactive proenzyme, which is activated by self-cleavage at a specific serine bond to produce a beta-subunit with a hydroxyl group at its C-terminus and an alpha-subunit with a pyruvoyl group at its N-terminus.

The protein resides in the cytoplasm. It carries out the reaction L-aspartate + H(+) = beta-alanine + CO2. It participates in cofactor biosynthesis; (R)-pantothenate biosynthesis; beta-alanine from L-aspartate: step 1/1. In terms of biological role, catalyzes the pyruvoyl-dependent decarboxylation of aspartate to produce beta-alanine. This is Aspartate 1-decarboxylase 2 from Gloeobacter violaceus (strain ATCC 29082 / PCC 7421).